We begin with the raw amino-acid sequence, 397 residues long: Probable transport protein MmpL6 (397 aa).

5 consecutive transmembrane segments (helical) span residues 190–210 (YDLL…MMII), 214–234 (LVAA…SFGL), 242–262 (LLGI…LLAV), 293–313 (TGGV…SFVF), and 328–348 (LGLL…IAVL).

The protein belongs to the resistance-nodulation-cell division (RND) (TC 2.A.6) family. MmpL subfamily.

The protein localises to the cell membrane. The protein is Probable transport protein MmpL6 (mmpL6) of Mycobacterium tuberculosis (strain CDC 1551 / Oshkosh).